The sequence spans 756 residues: Xylosyl- and glucuronyltransferase LARGE1 (756 aa).

Residues 1-10 are Cytoplasmic-facing; that stretch reads MLGICRGRRK. The helical; Signal-anchor for type II membrane protein transmembrane segment at 11 to 31 threads the bilayer; the sequence is FLAASLTVLFVPAVTWIYLFA. The Lumenal portion of the chain corresponds to 32-756; it reads GSFEDGKPVS…LKYLTAENNS (725 aa). Disordered regions lie at residues 42-63 and 81-109; these read LSPLESQPHSPRYTASSQRDRE and KQLSLAQGRSPSHHRGNHSKTYSMEEGTG. A compositionally biased stretch (polar residues) spans 44 to 58; the sequence is PLESQPHSPRYTASS. Positions 55–90 form a coiled coil; the sequence is TASSQRDRESLEVRMREVEEENRVLRKQLSLAQGRS. Asn-97, Asn-122, and Asn-148 each carry an N-linked (GlcNAc...) asparagine glycan. The segment at 138 to 413 is xylosyltransferase activity; the sequence is IHVAIVCAGY…FLEYDGNLLR (276 aa). The Mn(2+) site is built by Asp-242 and Asp-244. Asn-272 carries N-linked (GlcNAc...) asparagine glycosylation. The interval 414–756 is glucuronyltransferase activity; the sequence is RELFGCPSEA…LKYLTAENNS (343 aa). Mn(2+)-binding residues include Asp-563 and Asp-565.

This sequence in the C-terminal section; belongs to the glycosyltransferase 49 family. In the N-terminal section; belongs to the glycosyltransferase 8 family. Mn(2+) serves as cofactor.

The protein localises to the golgi apparatus membrane. The enzyme catalyses 3-O-[beta-D-GlcA-(1-&gt;3)-beta-D-Xyl-(1-&gt;4)-Rib-ol-P-Rib-ol-P-3-beta-D-GalNAc-(1-&gt;3)-beta-D-GlcNAc-(1-&gt;4)-(O-6-P-alpha-D-Man)]-Thr-[protein] + UDP-alpha-D-xylose = 3-O-[alpha-D-Xyl-(1-&gt;3)-beta-D-GlcA-(1-&gt;4)-beta-D-Xyl-(1-&gt;4)-Rib-ol-P-Rib-ol-P-3-beta-D-GalNAc-(1-&gt;3)-beta-D-GlcNAc-(1-&gt;4)-(O-6-P-alpha-D-Man)]-Thr-[protein] + UDP + H(+). It catalyses the reaction 3-O-{(1-&gt;[3)-alpha-D-Xyl-(1-&gt;3)-beta-D-GlcA-(1-&gt;](n)-4)-beta-D-Xyl-(1-&gt;4)-Rib-ol-P-Rib-ol-P-3-beta-D-GalNAc-(1-&gt;3)-beta-D-GlcNAc-(1-&gt;4)-O-6-P-alpha-D-Man}-L-Thr-[protein] + UDP-alpha-D-glucuronate = 3-O-{beta-D-GlcA-(1-&gt;[3)-alpha-D-Xyl-(1-&gt;3)-beta-D-GlcA-(1-&gt;](n)-4)-beta-D-Xyl-(1-&gt;4)-Rib-ol-P-Rib-ol-P-3-beta-D-GalNAc-(1-&gt;3)-beta-D-GlcNAc-(1-&gt;4)-O-6-P-alpha-D-Man}-L-Thr-[protein] + UDP + H(+). It carries out the reaction 3-O-{beta-D-GlcA-(1-&gt;[3)-alpha-D-Xyl-(1-&gt;3)-beta-D-GlcA-(1-&gt;](n)-4)-beta-D-Xyl-(1-&gt;4)-Rib-ol-P-Rib-ol-P-3-beta-D-GalNAc-(1-&gt;3)-beta-D-GlcNAc-(1-&gt;4)-O-6-P-alpha-D-Man}-L-Thr-[protein] + UDP-alpha-D-xylose = 3-O-{(1-&gt;[3)-alpha-D-Xyl-(1-&gt;3)-beta-D-GlcA-(1-&gt;](n+1)-4)-beta-D-Xyl-(1-&gt;4)-Rib-ol-P-Rib-ol-P-3-beta-D-GalNAc-(1-&gt;3)-beta-D-GlcNAc-(1-&gt;4)-O-6-P-alpha-D-Man}-L-Thr-[protein] + UDP + H(+). Its pathway is protein modification; protein glycosylation. Bifunctional glycosyltransferase with both alpha-1,3-xylosyltransferase and beta-1,3-glucuronyltransferase activities involved in the maturation of alpha-dystroglycan (DAG1) by glycosylation leading to DAG1 binding to laminin G-like domain-containing extracellular proteins with high affinity. Elongates the glucuronyl-beta-1,4-xylose-beta disaccharide primer structure initiated by B4GAT1 by adding repeating units [-3-Xylose-alpha-1,3-GlcA-beta-1-] to produce a heteropolysaccharide. Requires the phosphorylation of core M3 (O-mannosyl trisaccharide) by POMK to elongate the glucuronyl-beta-1,4-xylose-beta disaccharide primer. Plays a key role in skeletal muscle function and regeneration. This is Xylosyl- and glucuronyltransferase LARGE1 from Gallus gallus (Chicken).